The following is a 295-amino-acid chain: Aspartate carbamoyltransferase catalytic subunit (295 aa).

Carbamoyl phosphate-binding residues include R49 and T50. K77 contacts L-aspartate. Residues R99, H127, and Q130 each coordinate carbamoyl phosphate. Residues R161 and R212 each coordinate L-aspartate. Carbamoyl phosphate is bound by residues G251 and P252.

It belongs to the aspartate/ornithine carbamoyltransferase superfamily. ATCase family. Heterododecamer (2C3:3R2) of six catalytic PyrB chains organized as two trimers (C3), and six regulatory PyrI chains organized as three dimers (R2).

The enzyme catalyses carbamoyl phosphate + L-aspartate = N-carbamoyl-L-aspartate + phosphate + H(+). The protein operates within pyrimidine metabolism; UMP biosynthesis via de novo pathway; (S)-dihydroorotate from bicarbonate: step 2/3. Catalyzes the condensation of carbamoyl phosphate and aspartate to form carbamoyl aspartate and inorganic phosphate, the committed step in the de novo pyrimidine nucleotide biosynthesis pathway. The protein is Aspartate carbamoyltransferase catalytic subunit of Campylobacter jejuni subsp. doylei (strain ATCC BAA-1458 / RM4099 / 269.97).